Consider the following 195-residue polypeptide: Nicotinamide riboside kinase 1 (195 aa).

10-18 (GVTNGGKTT) contacts ATP. Residues Thr17 and Asp36 each contribute to the Mg(2+) site. Asp36 functions as the Proton acceptor in the catalytic mechanism. Residues 36-39 (DDFF) and 55-56 (YD) each bind substrate. Residue Arg128 coordinates ATP. Substrate is bound by residues Arg129 and 134–135 (YE). ATP-binding positions include 132-134 (RVY) and 172-174 (RSE).

This sequence belongs to the uridine kinase family. NRK subfamily. In terms of assembly, monomer.

It catalyses the reaction beta-nicotinamide D-riboside + ATP = beta-nicotinamide D-ribonucleotide + ADP + H(+). It carries out the reaction beta-D-ribosylnicotinate + ATP = nicotinate beta-D-ribonucleotide + ADP + H(+). It participates in cofactor biosynthesis; NAD(+) biosynthesis. Its function is as follows. Catalyzes the phosphorylation of nicotinamide riboside (NR) and nicotinic acid riboside (NaR) to form nicotinamide mononucleotide (NMN) and nicotinic acid mononucleotide (NaMN). This Mus musculus (Mouse) protein is Nicotinamide riboside kinase 1 (Nmrk1).